The chain runs to 437 residues: Probable glycine dehydrogenase (decarboxylating) subunit 1 (437 aa).

Belongs to the GcvP family. N-terminal subunit subfamily. In terms of assembly, the glycine cleavage system is composed of four proteins: P, T, L and H. In this organism, the P 'protein' is a heterodimer of two subunits.

It catalyses the reaction N(6)-[(R)-lipoyl]-L-lysyl-[glycine-cleavage complex H protein] + glycine + H(+) = N(6)-[(R)-S(8)-aminomethyldihydrolipoyl]-L-lysyl-[glycine-cleavage complex H protein] + CO2. Its function is as follows. The glycine cleavage system catalyzes the degradation of glycine. The P protein binds the alpha-amino group of glycine through its pyridoxal phosphate cofactor; CO(2) is released and the remaining methylamine moiety is then transferred to the lipoamide cofactor of the H protein. The sequence is that of Probable glycine dehydrogenase (decarboxylating) subunit 1 from Thermotoga petrophila (strain ATCC BAA-488 / DSM 13995 / JCM 10881 / RKU-1).